The following is a 357-amino-acid chain: 3-isopropylmalate dehydrogenase (357 aa).

R97, R107, R135, and D224 together coordinate substrate. Positions 224, 248, and 252 each coordinate Mg(2+). 282-294 (GSAPDIAGKNIAN) is an NAD(+) binding site.

This sequence belongs to the isocitrate and isopropylmalate dehydrogenases family. LeuB type 1 subfamily. Homodimer. Mg(2+) is required as a cofactor. The cofactor is Mn(2+).

Its subcellular location is the cytoplasm. It carries out the reaction (2R,3S)-3-isopropylmalate + NAD(+) = 4-methyl-2-oxopentanoate + CO2 + NADH. It participates in amino-acid biosynthesis; L-leucine biosynthesis; L-leucine from 3-methyl-2-oxobutanoate: step 3/4. Functionally, catalyzes the oxidation of 3-carboxy-2-hydroxy-4-methylpentanoate (3-isopropylmalate) to 3-carboxy-4-methyl-2-oxopentanoate. The product decarboxylates to 4-methyl-2 oxopentanoate. The chain is 3-isopropylmalate dehydrogenase from Prochlorococcus marinus (strain MIT 9312).